The chain runs to 142 residues: Hemoglobin subunit alpha-1 (142 aa).

Residues 2–142 form the Globin domain; sequence VLSAADKSNV…VSTVLTSKYR (141 aa). O2 is bound at residue H59. H88 serves as a coordination point for heme b.

Belongs to the globin family. Heterotetramer of two alpha chains and two beta chains.

In terms of biological role, involved in oxygen transport from the lung to the various peripheral tissues. Its function is as follows. Hemopressin acts as an antagonist peptide of the cannabinoid receptor CNR1. Hemopressin-binding efficiently blocks cannabinoid receptor CNR1 and subsequent signaling. The polypeptide is Hemoglobin subunit alpha-1 (HBA1) (Capra hircus (Goat)).